A 402-amino-acid chain; its full sequence is Pyruvate synthase subunit PorA (402 aa).

In terms of assembly, heterotetramer of one alpha, one beta, one delta and one gamma chain.

It catalyses the reaction 2 oxidized [2Fe-2S]-[ferredoxin] + pyruvate + CoA = 2 reduced [2Fe-2S]-[ferredoxin] + acetyl-CoA + CO2 + H(+). The sequence is that of Pyruvate synthase subunit PorA (porA) from Methanosarcina barkeri (strain Fusaro / DSM 804).